Reading from the N-terminus, the 349-residue chain is Isopentenyl-diphosphate delta-isomerase (349 aa).

6–7 (RK) lines the substrate pocket. Residues 62–64 (AMT), serine 93, and asparagine 122 contribute to the FMN site. Glutamine 152 contacts substrate. Glutamate 153 contributes to the Mg(2+) binding site. FMN is bound by residues lysine 184, threonine 214, 258–259 (GG), and 280–281 (AG).

This sequence belongs to the IPP isomerase type 2 family. As to quaternary structure, homooctamer. Dimer of tetramers. Requires FMN as cofactor. NADPH is required as a cofactor. It depends on Mg(2+) as a cofactor.

Its subcellular location is the cytoplasm. The enzyme catalyses isopentenyl diphosphate = dimethylallyl diphosphate. Functionally, involved in the biosynthesis of isoprenoids. Catalyzes the 1,3-allylic rearrangement of the homoallylic substrate isopentenyl (IPP) to its allylic isomer, dimethylallyl diphosphate (DMAPP). The polypeptide is Isopentenyl-diphosphate delta-isomerase (Bacillus cereus (strain ZK / E33L)).